The following is a 337-amino-acid chain: D-alanine--D-alanine ligase (337 aa).

The ATP-grasp domain occupies 124-330; sequence KMWFSALGIP…FTEYLSLVIN (207 aa). 154 to 209 lines the ATP pocket; it reads ALAQWGSIFVKAASQGSSVGCYKVDDSAKVAGVLKDAFGYAPYVIVEKTIKARELE. Positions 284, 297, and 299 each coordinate Mg(2+).

This sequence belongs to the D-alanine--D-alanine ligase family. Mg(2+) is required as a cofactor. Mn(2+) serves as cofactor.

The protein resides in the cytoplasm. It catalyses the reaction 2 D-alanine + ATP = D-alanyl-D-alanine + ADP + phosphate + H(+). It functions in the pathway cell wall biogenesis; peptidoglycan biosynthesis. Its function is as follows. Cell wall formation. This chain is D-alanine--D-alanine ligase, found in Shewanella baltica (strain OS185).